Here is a 546-residue protein sequence, read N- to C-terminus: MWLNFIFRRTAPVPFLESILIKEAKKESLRFQRSLFDSFSYGFVVGGERESLLRFSENLSKNLPLSLFFFFIKVEPLEGEPPSLETLAENPAQGVMDFTPLEMEAFLPKEGERSLRSLPWRVSFQLKGEKRENLEGEALYEAFEALAKKVLEGESILITTRRGLYQLSLKGTKKTQKGENKPLFMPLDVASAELLFRVCEPELNALATWEKPRIELAPKGVFLDRFEGALYPESGVEVLLPYDLPLMILSHFLRAHEVEMVVLERALEGEGEGLFYENSEPLESLKVCVSDDSTVLVTDRERGGLIPDYSTLISKLLEENHLHEGALALHLSHHAPSYFWLIQGEARRSVMRFELPLNPALLWQEIAQSGETGESLTQNFSREFPGLAKRIQNSQAQGVSENLNDWVGMAGFFLGLQEEWNPKGAQEALWSKAKAFLGAKGPRVDFPLKKEESGRVGLDATRVIRSCMSFKLAGIDDETLAFGVIDSLAEFWGNLLRDMSENFAQERVILSGSLLSNRAFLNKILQYTPKHLQLHFPLQTPLDFVS.

The polypeptide is Protein HydE (hydE) (Wolinella succinogenes (strain ATCC 29543 / DSM 1740 / CCUG 13145 / JCM 31913 / LMG 7466 / NCTC 11488 / FDC 602W) (Vibrio succinogenes)).